The following is a 78-amino-acid chain: Acyl carrier protein (78 aa).

The region spanning 2–77 is the Carrier domain; sequence SEIASRVKAI…DAVSYIEEHA (76 aa). At serine 37 the chain carries O-(pantetheine 4'-phosphoryl)serine.

The protein belongs to the acyl carrier protein (ACP) family. Post-translationally, 4'-phosphopantetheine is transferred from CoA to a specific serine of apo-ACP by AcpS. This modification is essential for activity because fatty acids are bound in thioester linkage to the sulfhydryl of the prosthetic group.

Its subcellular location is the cytoplasm. The protein operates within lipid metabolism; fatty acid biosynthesis. In terms of biological role, carrier of the growing fatty acid chain in fatty acid biosynthesis. This is Acyl carrier protein from Bacteroides thetaiotaomicron (strain ATCC 29148 / DSM 2079 / JCM 5827 / CCUG 10774 / NCTC 10582 / VPI-5482 / E50).